Consider the following 96-residue polypeptide: Co-chaperonin GroES (96 aa).

This sequence belongs to the GroES chaperonin family. In terms of assembly, heptamer of 7 subunits arranged in a ring. Interacts with the chaperonin GroEL.

It localises to the cytoplasm. In terms of biological role, together with the chaperonin GroEL, plays an essential role in assisting protein folding. The GroEL-GroES system forms a nano-cage that allows encapsulation of the non-native substrate proteins and provides a physical environment optimized to promote and accelerate protein folding. GroES binds to the apical surface of the GroEL ring, thereby capping the opening of the GroEL channel. This chain is Co-chaperonin GroES, found in Acinetobacter baumannii (strain AB307-0294).